We begin with the raw amino-acid sequence, 246 residues long: Adenosylcobinamide-GDP ribazoletransferase (246 aa).

Helical transmembrane passes span Ile-34–Leu-54, Cys-59–Phe-79, Gly-113–Leu-133, Pro-138–Tyr-158, Leu-171–Leu-191, and Val-194–Leu-214.

Belongs to the CobS family. The cofactor is Mg(2+).

It is found in the cell inner membrane. The catalysed reaction is alpha-ribazole + adenosylcob(III)inamide-GDP = adenosylcob(III)alamin + GMP + H(+). The enzyme catalyses alpha-ribazole 5'-phosphate + adenosylcob(III)inamide-GDP = adenosylcob(III)alamin 5'-phosphate + GMP + H(+). It functions in the pathway cofactor biosynthesis; adenosylcobalamin biosynthesis; adenosylcobalamin from cob(II)yrinate a,c-diamide: step 7/7. In terms of biological role, joins adenosylcobinamide-GDP and alpha-ribazole to generate adenosylcobalamin (Ado-cobalamin). Also synthesizes adenosylcobalamin 5'-phosphate from adenosylcobinamide-GDP and alpha-ribazole 5'-phosphate. The chain is Adenosylcobinamide-GDP ribazoletransferase from Klebsiella pneumoniae (strain 342).